Consider the following 413-residue polypeptide: Multifunctional CCA protein (413 aa).

ATP contacts are provided by Gly-8 and Arg-11. CTP-binding residues include Gly-8 and Arg-11. Residues Asp-21 and Asp-23 each coordinate Mg(2+). Residues Arg-91, Arg-137, and Arg-140 each coordinate ATP. Residues Arg-91, Arg-137, and Arg-140 each contribute to the CTP site. Positions 228-329 constitute an HD domain; it reads TGVHTLMTLS…VKLFDAIDAW (102 aa).

It belongs to the tRNA nucleotidyltransferase/poly(A) polymerase family. Bacterial CCA-adding enzyme type 1 subfamily. In terms of assembly, monomer. Can also form homodimers and oligomers. The cofactor is Mg(2+). Ni(2+) serves as cofactor.

It carries out the reaction a tRNA precursor + 2 CTP + ATP = a tRNA with a 3' CCA end + 3 diphosphate. The enzyme catalyses a tRNA with a 3' CCA end + 2 CTP + ATP = a tRNA with a 3' CCACCA end + 3 diphosphate. Functionally, catalyzes the addition and repair of the essential 3'-terminal CCA sequence in tRNAs without using a nucleic acid template. Adds these three nucleotides in the order of C, C, and A to the tRNA nucleotide-73, using CTP and ATP as substrates and producing inorganic pyrophosphate. tRNA 3'-terminal CCA addition is required both for tRNA processing and repair. Also involved in tRNA surveillance by mediating tandem CCA addition to generate a CCACCA at the 3' terminus of unstable tRNAs. While stable tRNAs receive only 3'-terminal CCA, unstable tRNAs are marked with CCACCA and rapidly degraded. The protein is Multifunctional CCA protein of Salmonella choleraesuis (strain SC-B67).